Reading from the N-terminus, the 647-residue chain is Putative ferric-chelate reductase 1 homolog (647 aa).

The helical transmembrane segment at 10-30 threads the bilayer; the sequence is WLATLVTALLAVAIWPDPGQS. The Reelin domain occupies 25 to 195; sequence PDPGQSLPQG…AAPPLPTQSP (171 aa). N-linked (GlcNAc...) asparagine glycosylation is found at Asn127 and Asn158. In terms of domain architecture, DOMON spans 245-368; the sequence is TKSCTSITVV…GKYHLLVASG (124 aa). Positions 372–570 constitute a Cytochrome b561 domain; sequence KENSVGYHDI…HLIFSIGGMA (199 aa). A helical membrane pass occupies residues 408–428; it reads LHGAFMIAAWIGTTSLGIIFA. Positions 409 and 450 each coordinate heme b. 5 consecutive transmembrane segments (helical) span residues 452–472, 480–500, 515–535, 548–568, and 616–636; these read LLMV…WVEL, HSII…GALF, GHWL…FFSV, WILV…SIGG, and LLGV…LLVV. The heme b site is built by His480 and His516.

It belongs to the FRRS1 family. It depends on heme b as a cofactor.

It localises to the membrane. In terms of biological role, putative ferric-chelate reductases reduce Fe(3+) to Fe(2+) before its transport from the endosome to the cytoplasm. The protein is Putative ferric-chelate reductase 1 homolog of Drosophila melanogaster (Fruit fly).